We begin with the raw amino-acid sequence, 338 residues long: D-erythrose-4-phosphate dehydrogenase (338 aa).

11 to 12 (RI) serves as a coordination point for NAD(+). Substrate is bound by residues 153 to 155 (SCT), Arg199, 212 to 213 (TK), and Arg235. Cys154 (nucleophile) is an active-site residue. NAD(+) is bound at residue Asn317.

The protein belongs to the glyceraldehyde-3-phosphate dehydrogenase family. Epd subfamily. Homotetramer.

Its subcellular location is the cytoplasm. It carries out the reaction D-erythrose 4-phosphate + NAD(+) + H2O = 4-phospho-D-erythronate + NADH + 2 H(+). Its pathway is cofactor biosynthesis; pyridoxine 5'-phosphate biosynthesis; pyridoxine 5'-phosphate from D-erythrose 4-phosphate: step 1/5. Catalyzes the NAD-dependent conversion of D-erythrose 4-phosphate to 4-phosphoerythronate. This chain is D-erythrose-4-phosphate dehydrogenase, found in Shewanella oneidensis (strain ATCC 700550 / JCM 31522 / CIP 106686 / LMG 19005 / NCIMB 14063 / MR-1).